A 338-amino-acid polypeptide reads, in one-letter code: Phospho-2-dehydro-3-deoxyheptonate aldolase (338 aa).

It belongs to the class-I DAHP synthase family. Homotetramer. A divalent metal cation is required as a cofactor.

It carries out the reaction D-erythrose 4-phosphate + phosphoenolpyruvate + H2O = 7-phospho-2-dehydro-3-deoxy-D-arabino-heptonate + phosphate. It functions in the pathway metabolic intermediate biosynthesis; chorismate biosynthesis; chorismate from D-erythrose 4-phosphate and phosphoenolpyruvate: step 1/7. With respect to regulation, inhibited by L-phenylalanine and L-tyrosine. In terms of biological role, catalyzes the condensation of phosphoenolpyruvate (PEP) and D-erythrose-4-phosphate (E4P) giving rise to 3-deoxy-D-arabino-heptulosonate-7-phosphate (DAHP). The polypeptide is Phospho-2-dehydro-3-deoxyheptonate aldolase (aroF) (Thermotoga maritima (strain ATCC 43589 / DSM 3109 / JCM 10099 / NBRC 100826 / MSB8)).